The chain runs to 229 residues: Urease accessory protein UreF (229 aa).

It belongs to the UreF family. In terms of assembly, ureD, UreF and UreG form a complex that acts as a GTP-hydrolysis-dependent molecular chaperone, activating the urease apoprotein by helping to assemble the nickel containing metallocenter of UreC. The UreE protein probably delivers the nickel.

It localises to the cytoplasm. Required for maturation of urease via the functional incorporation of the urease nickel metallocenter. In Staphylococcus epidermidis (strain ATCC 35984 / DSM 28319 / BCRC 17069 / CCUG 31568 / BM 3577 / RP62A), this protein is Urease accessory protein UreF.